Consider the following 412-residue polypeptide: Short-chain specific acyl-CoA dehydrogenase, mitochondrial (412 aa).

The N-terminal 24 residues, 1 to 24, are a transit peptide targeting the mitochondrion; the sequence is MAAALLARASGPARRALCPRAWRQ. Residue T27 is modified to Phosphothreonine. K51 bears the N6-acetyllysine; alternate mark. An N6-succinyllysine; alternate modification is found at K51. Position 72 is an N6-acetyllysine (K72). K129 carries the N6-acetyllysine; alternate modification. At K129 the chain carries N6-succinyllysine; alternate. FAD-binding positions include 152–161 and 185–187; these read FALSEPGNGS and WIT. Residue S161 coordinates substrate. The residue at position 208 (K208) is an N6-acetyllysine. An N6-acetyllysine; alternate modification is found at K262. K262 carries the post-translational modification N6-succinyllysine; alternate. A substrate-binding site is contributed by 269 to 272; sequence DMGR. Residue R297 coordinates FAD. The residue at position 306 (K306) is an N6-acetyllysine; alternate. K306 carries the N6-succinyllysine; alternate modification. FAD-binding positions include Q308 and 365-369; that span reads QILGG. The active-site Proton acceptor is the E392. Residue G393 participates in substrate binding. Residue 394–396 coordinates FAD; sequence TSE.

The protein belongs to the acyl-CoA dehydrogenase family. In terms of assembly, homotetramer. FAD serves as cofactor.

It localises to the mitochondrion matrix. The catalysed reaction is a short-chain 2,3-saturated fatty acyl-CoA + oxidized [electron-transfer flavoprotein] + H(+) = a short-chain (2E)-enoyl-CoA + reduced [electron-transfer flavoprotein]. The enzyme catalyses butanoyl-CoA + oxidized [electron-transfer flavoprotein] + H(+) = (2E)-butenoyl-CoA + reduced [electron-transfer flavoprotein]. It catalyses the reaction pentanoyl-CoA + oxidized [electron-transfer flavoprotein] + H(+) = (2E)-pentenoyl-CoA + reduced [electron-transfer flavoprotein]. It carries out the reaction hexanoyl-CoA + oxidized [electron-transfer flavoprotein] + H(+) = (2E)-hexenoyl-CoA + reduced [electron-transfer flavoprotein]. The protein operates within lipid metabolism; mitochondrial fatty acid beta-oxidation. Functionally, short-chain specific acyl-CoA dehydrogenase is one of the acyl-CoA dehydrogenases that catalyze the first step of mitochondrial fatty acid beta-oxidation, an aerobic process breaking down fatty acids into acetyl-CoA and allowing the production of energy from fats. The first step of fatty acid beta-oxidation consists in the removal of one hydrogen from C-2 and C-3 of the straight-chain fatty acyl-CoA thioester, resulting in the formation of trans-2-enoyl-CoA. Among the different mitochondrial acyl-CoA dehydrogenases, short-chain specific acyl-CoA dehydrogenase acts specifically on acyl-CoAs with saturated 4 to 6 carbons long primary chains. The sequence is that of Short-chain specific acyl-CoA dehydrogenase, mitochondrial (ACADS) from Homo sapiens (Human).